A 301-amino-acid chain; its full sequence is GTPase Era (301 aa).

The 167-residue stretch at 7–173 (KSGFVALLGR…LNTINKYLPE (167 aa)) folds into the Era-type G domain. The interval 15-22 (GRPNVGKS) is G1. 15–22 (GRPNVGKS) serves as a coordination point for GTP. Residues 41–45 (QTTRN) are G2. Residues 62 to 65 (DTPG) form a G3 region. Residues 62 to 66 (DTPGI) and 123 to 126 (NKVD) contribute to the GTP site. Residues 123–126 (NKVD) are G4. The interval 152–154 (ISA) is G5. One can recognise a KH type-2 domain in the interval 204 to 281 (TSQEVPHATA…NLRLWVKVQH (78 aa)).

Belongs to the TRAFAC class TrmE-Era-EngA-EngB-Septin-like GTPase superfamily. Era GTPase family. In terms of assembly, monomer.

The protein localises to the cytoplasm. The protein resides in the cell membrane. An essential GTPase that binds both GDP and GTP, with rapid nucleotide exchange. Plays a role in 16S rRNA processing and 30S ribosomal subunit biogenesis and possibly also in cell cycle regulation and energy metabolism. This Lactobacillus helveticus (strain DPC 4571) protein is GTPase Era.